The chain runs to 430 residues: Enolase (430 aa).

Gln-163 provides a ligand contact to (2R)-2-phosphoglycerate. Glu-205 functions as the Proton donor in the catalytic mechanism. Residues Asp-242, Glu-287, and Asp-314 each contribute to the Mg(2+) site. Residues Lys-339, Arg-368, Ser-369, and Lys-390 each coordinate (2R)-2-phosphoglycerate. The active-site Proton acceptor is the Lys-339.

It belongs to the enolase family. It depends on Mg(2+) as a cofactor.

It is found in the cytoplasm. Its subcellular location is the secreted. It localises to the cell surface. It catalyses the reaction (2R)-2-phosphoglycerate = phosphoenolpyruvate + H2O. It functions in the pathway carbohydrate degradation; glycolysis; pyruvate from D-glyceraldehyde 3-phosphate: step 4/5. Its function is as follows. Catalyzes the reversible conversion of 2-phosphoglycerate (2-PG) into phosphoenolpyruvate (PEP). It is essential for the degradation of carbohydrates via glycolysis. The chain is Enolase from Bacillus cytotoxicus (strain DSM 22905 / CIP 110041 / 391-98 / NVH 391-98).